A 376-amino-acid chain; its full sequence is Erythronate-4-phosphate dehydrogenase (376 aa).

Substrate-binding residues include S45 and T67. D147 provides a ligand contact to NAD(+). R209 is a catalytic residue. D233 is an NAD(+) binding site. E238 is an active-site residue. Catalysis depends on H255, which acts as the Proton donor. Position 258 (G258) interacts with NAD(+). Y259 serves as a coordination point for substrate.

The protein belongs to the D-isomer specific 2-hydroxyacid dehydrogenase family. PdxB subfamily. In terms of assembly, homodimer.

The protein resides in the cytoplasm. The enzyme catalyses 4-phospho-D-erythronate + NAD(+) = (R)-3-hydroxy-2-oxo-4-phosphooxybutanoate + NADH + H(+). Its pathway is cofactor biosynthesis; pyridoxine 5'-phosphate biosynthesis; pyridoxine 5'-phosphate from D-erythrose 4-phosphate: step 2/5. Its function is as follows. Catalyzes the oxidation of erythronate-4-phosphate to 3-hydroxy-2-oxo-4-phosphonooxybutanoate. This is Erythronate-4-phosphate dehydrogenase from Shewanella sp. (strain W3-18-1).